The following is a 75-amino-acid chain: Guanine nucleotide-binding protein G(I)/G(S)/G(O) subunit gamma-4 (75 aa).

Cysteine methyl ester is present on C72. The S-geranylgeranyl cysteine moiety is linked to residue C72. Residues 73 to 75 constitute a propeptide, removed in mature form; it reads TIL.

The protein belongs to the G protein gamma family. G proteins are composed of 3 units, alpha, beta and gamma. Interacts with beta-1 and beta-2, but not with beta-3. Interacts with KCNK1. Interacts (via C-terminus) with KCNK2/TREK-1 (via N-terminus); this interaction confers ion selectivity to Cl(-) and L-glutamate. In terms of tissue distribution, brain, kidney, pancreas, skeletal muscle and faintly in cardiac muscle.

It localises to the cell membrane. In terms of biological role, guanine nucleotide-binding proteins (G proteins) are involved as a modulator or transducer in various transmembrane signaling systems. The beta and gamma chains are required for the GTPase activity, for replacement of GDP by GTP, and for G protein-effector interaction. The sequence is that of Guanine nucleotide-binding protein G(I)/G(S)/G(O) subunit gamma-4 (GNG4) from Homo sapiens (Human).